Reading from the N-terminus, the 368-residue chain is Putative potassium channel KAT5 (368 aa).

3 consecutive transmembrane segments (helical) span residues 33-53, 97-117, and 132-152; these read WWHM…PFEL, LLNL…ARVE, and LLCV…WMVF. Residues 180 to 199 constitute an intramembrane region (pore-forming); sequence CAVYWSITTLATVGYGDLHA. The chain crosses the membrane as a helical span at residues 206 to 226; the sequence is LFSIAFMLFNMGLTSYIIGNI. 225–344 serves as a coordination point for a nucleoside 3',5'-cyclic phosphate; it reads NITNLVVRET…CIVFSNFILV (120 aa).

This sequence belongs to the potassium channel family. Plant (TC 1.A.1.4) subfamily.

The protein localises to the membrane. In terms of biological role, putative inward-rectifying potassium channel. The protein is Putative potassium channel KAT5 of Oryza sativa subsp. japonica (Rice).